A 448-amino-acid polypeptide reads, in one-letter code: Vicilin Cor a 11.0101 (448 aa).

Residues 1 to 44 (MLPKEDPELKKCKHKCRDERQFDEQQRRDGKQICEEKARERQQE) show a composition bias toward basic and acidic residues. Residues 1–66 (MLPKEDPELK…QEENPYVFQD (66 aa)) form a disordered region. N-linked (GlcNAc...) asparagine glycosylation occurs at Asn47. 2 consecutive Cupin type-1 domains span residues 84–220 (ENFT…EQLE) and 263–418 (INLL…REVE). N-linked (GlcNAc...) asparagine glycosylation occurs at Asn301. Residues Cys333, His335, and His362 each contribute to the Cu cation site.

Belongs to the 7S seed storage protein family. Homotrimer. Homohexamer. In terms of processing, N-glycosylated at Asn-301 mostly with xylosylated paucimannosidic-type N-glycan MMX (an N-linked glycan with beta-1,2-xylose residue in the structure) and also with MMXF (a complex N-linked glycan with alpha-1,3-fucose and beta-1,2-xylose residues in the structure). Post-translationally, a mixture of proteolytically processed and unprocessed subunits exist. In terms of tissue distribution, expressed in seed (at protein level). Expressed in seed.

Its function is as follows. Seed storage protein. Does not have superoxide dismutase (SOD) activity. The chain is Vicilin Cor a 11.0101 from Corylus avellana (European hazel).